A 605-amino-acid polypeptide reads, in one-letter code: Ras guanine nucleotide exchange factor A (605 aa).

The LisH domain maps to Asp67–Thr99. The region spanning Asp198–Ser320 is the N-terminal Ras-GEF domain. The Ras-GEF domain occupies Asp353 to Lys597.

In terms of assembly, component of the Sca1 complex composed of at least gefA, gefH, scaA, phr, and the protein phosphatase 2A subunits pppA and pho2B. Interacts directly with gefH.

Its subcellular location is the cell membrane. Ras-bound GDP/GTP exchange factor required for normal activation of adenylyl cyclase. Component of the Sca1 complex, a regulator of cell motility, chemotaxis and signal relay. The Sca1 complex is recruited to the plasma membrane in a chemoattractant- and F-actin-dependent manner and is enriched at the leading edge of chemotaxing cells where it regulates F-actin dynamics and signal relay by controlling the activation of rasC and the downstream target of rapamycin complex 2 (TORC2)-Akt/protein kinase B (PKB) pathway. This chain is Ras guanine nucleotide exchange factor A (gefA), found in Dictyostelium discoideum (Social amoeba).